A 378-amino-acid polypeptide reads, in one-letter code: O-methyltransferase dpfgI (378 aa).

S-adenosyl-L-methionine-binding positions include 232–233 (GG), Asp-257, 279–280 (NF), and Arg-295. His-299 serves as the catalytic Proton acceptor.

The protein belongs to the class I-like SAM-binding methyltransferase superfamily. Cation-independent O-methyltransferase family.

It participates in secondary metabolite biosynthesis; terpenoid biosynthesis. Its function is as follows. O-methyltransferase; part of the gene cluster that mediates the biosynthesis of diterpenoid pyrones. The first step of the pathway is the synthesis of the alpha-pyrone moiety by the polyketide synthase dpfgA via condensation of one acetyl-CoA starter unit with 3 malonyl-CoA units and 2 methylations. The alpha-pyrone is then combined with geranylgeranyl pyrophosphate (GGPP) formed by the GGPP synthase dpfgD through the action of the prenyltransferase dpfgC to yield a linear alpha-pyrone diterpenoid. Subsequent steps in the diterpenoid pyrone biosynthetic pathway involve the decalin core formation, which is initiated by the epoxidation of the C10-C11 olefin by the FAD-dependent oxidoreductase dpfgE, and is followed by a cyclization cascade catalyzed by the terpene cyclase dpfgB. The short chain dehydrogenase/reductase dpfgG then oxidizes the 8S hydroxy group to a ketone and the short chain dehydrogenase/reductase dpfgH reduces the ketone to the 8R hydroxy group to yield higginsianin B. Higginsianin B is further methylated by the methyltransferase dpfgI to produce the intermediate named FDDP B. The cytochrome P450 monooxygenase dfgpJ then catalyzes a three-step oxidation at C-27 to generate a carboxylic acid as well as C-26 hydroxylation. Finally, methyltransferase dpfgK methylates the carboxylic acid generated by dpfgJ, yielding the final diterpenoid pyrones from the pathway which were named FDDP D and FDDP E. The protein is O-methyltransferase dpfgI of Gibberella zeae (strain ATCC MYA-4620 / CBS 123657 / FGSC 9075 / NRRL 31084 / PH-1) (Wheat head blight fungus).